A 411-amino-acid chain; its full sequence is Multifunctional CCA protein (411 aa).

Residues glycine 8 and arginine 11 each contribute to the ATP site. The CTP site is built by glycine 8 and arginine 11. Mg(2+)-binding residues include aspartate 21 and aspartate 23. ATP-binding residues include arginine 91, arginine 143, and arginine 146. Arginine 91, arginine 143, and arginine 146 together coordinate CTP. An HD domain is found at 232-333; it reads TGVHVMMVID…MRLLERCDAL (102 aa).

It belongs to the tRNA nucleotidyltransferase/poly(A) polymerase family. Bacterial CCA-adding enzyme type 1 subfamily. In terms of assembly, monomer. Can also form homodimers and oligomers. It depends on Mg(2+) as a cofactor. Ni(2+) serves as cofactor.

It catalyses the reaction a tRNA precursor + 2 CTP + ATP = a tRNA with a 3' CCA end + 3 diphosphate. The enzyme catalyses a tRNA with a 3' CCA end + 2 CTP + ATP = a tRNA with a 3' CCACCA end + 3 diphosphate. In terms of biological role, catalyzes the addition and repair of the essential 3'-terminal CCA sequence in tRNAs without using a nucleic acid template. Adds these three nucleotides in the order of C, C, and A to the tRNA nucleotide-73, using CTP and ATP as substrates and producing inorganic pyrophosphate. tRNA 3'-terminal CCA addition is required both for tRNA processing and repair. Also involved in tRNA surveillance by mediating tandem CCA addition to generate a CCACCA at the 3' terminus of unstable tRNAs. While stable tRNAs receive only 3'-terminal CCA, unstable tRNAs are marked with CCACCA and rapidly degraded. This Cupriavidus necator (strain ATCC 17699 / DSM 428 / KCTC 22496 / NCIMB 10442 / H16 / Stanier 337) (Ralstonia eutropha) protein is Multifunctional CCA protein.